Consider the following 295-residue polypeptide: MEHQLLCCEVETIRRAYPDANLLNDRVLRAMLKAEETCAPSVSYFKCVQKEVLPSMRKIVATWMLEVCEEQKCEEEVFPLAMNYLDRFLSLEPVKKSRLQLLGATCMFVASKMKETIPLTAEKLCIYTDNSIRPEELLQMELLLVNKLKWNLAAMTPHDFIEHFLSKMPEAEENKQIIRKHAQTFVALCATDVKFISNPPSMVAAGSVVAAVQGLNLRSPNNFLSYYRLTRFLSRVIKCDPDCLRACQEQIEALLESSLRQAQQNMDPKAAEEEEEEEEEVDLACTPTDVRDVDI.

The Cyclin N-terminal domain occupies 28 to 152; sequence LRAMLKAEET…LLVNKLKWNL (125 aa). Residues 262 to 295 form a disordered region; sequence AQQNMDPKAAEEEEEEEEEVDLACTPTDVRDVDI. A Glycyl lysine isopeptide (Lys-Gly) (interchain with G-Cter in ubiquitin) cross-link involves residue Lys269. Residues 272 to 282 show a composition bias toward acidic residues; it reads EEEEEEEEEVD. Thr286 is modified (phosphothreonine).

It belongs to the cyclin family. Cyclin D subfamily. In terms of assembly, interacts with either CDK4 or CDK6 protein kinase to form a serine/threonine kinase holoenzyme complex. The cyclin subunit imparts substrate specificity to the complex. Component of the ternary complex CCND1/CDK4/CDKN1B required for nuclear translocation and modulation of CDK4-mediated kinase activity. Interacts directly with CDKN1B. Can form similar complexes with either CDKN1A or CDKN2A. Interacts with UHRF2; the interaction ubiquitinates CCND1 and appears to occur independently of phosphorylation. Interacts with USP2. Interacts (via cyclin N-terminal domain) with INSM1 (via N-terminal region); the interaction competes with the binding of CCND1 to CDK4 during cell cycle progression and inhibits CDK4 activity. Interacts with CDK4; the interaction is prevented with the binding of CCND1 to INSM1 during cell cycle progression. Phosphorylation at Thr-286 by MAP kinases is required for ubiquitination and degradation by the DCX(AMBRA1) complex. It also plays an essential role for recognition by the FBXO31 component of SCF (SKP1-cullin-F-box) protein ligase complex following DNA damage. In terms of processing, ubiquitinated at Lys-269 by the DCX(AMBRA1) complex during the transition from G1 to S cell phase, leading to its degradation: ubiquitination is dependent on Thr-286 phosphorylation. The DCX(AMBRA1) complex represents the major regulator of CCND1 stability during the G1/S transition. Also ubiquitinated by the SCF(FBXO4) and Cul7-RING(FBXW8) ubiquitin-protein ligase complexes. Following DNA damage it is ubiquitinated by the SCF(FBXO31) protein ligase complex. SCF(FBXO31) ubiquitination is dependent on Thr-286 phosphorylation. Ubiquitinated also by UHRF2 apparently in a phosphorylation-independent manner. Ubiquitination leads to its degradation and G1 arrest. Deubiquitinated by USP2; leading to its stabilization.

It localises to the nucleus. The protein localises to the cytoplasm. Its subcellular location is the nucleus membrane. Functionally, regulatory component of the cyclin D1-CDK4 (DC) complex that phosphorylates and inhibits members of the retinoblastoma (RB) protein family including RB1 and regulates the cell-cycle during G(1)/S transition. Phosphorylation of RB1 allows dissociation of the transcription factor E2F from the RB/E2F complex and the subsequent transcription of E2F target genes which are responsible for the progression through the G(1) phase. Hypophosphorylates RB1 in early G(1) phase. Cyclin D-CDK4 complexes are major integrators of various mitogenenic and antimitogenic signals. Also a substrate for SMAD3, phosphorylating SMAD3 in a cell-cycle-dependent manner and repressing its transcriptional activity. Component of the ternary complex, cyclin D1/CDK4/CDKN1B, required for nuclear translocation and activity of the cyclin D-CDK4 complex. Exhibits transcriptional corepressor activity with INSM1 on the NEUROD1 and INS promoters in a cell cycle-independent manner. The polypeptide is G1/S-specific cyclin-D1 (Homo sapiens (Human)).